The sequence spans 100 residues: Urease subunit gamma (100 aa).

This sequence belongs to the urease gamma subunit family. In terms of assembly, heterotrimer of UreA (gamma), UreB (beta) and UreC (alpha) subunits. Three heterotrimers associate to form the active enzyme.

The protein localises to the cytoplasm. It catalyses the reaction urea + 2 H2O + H(+) = hydrogencarbonate + 2 NH4(+). Its pathway is nitrogen metabolism; urea degradation; CO(2) and NH(3) from urea (urease route): step 1/1. This is Urease subunit gamma from Trichormus variabilis (strain ATCC 29413 / PCC 7937) (Anabaena variabilis).